Here is a 547-residue protein sequence, read N- to C-terminus: Methionine--tRNA ligase (547 aa).

Residues proline 13–histidine 23 carry the 'HIGH' region motif. Zn(2+) contacts are provided by cysteine 145, cysteine 148, cysteine 158, and cysteine 161. Positions glutamine 334 to serine 338 match the 'KMSKS' region motif. Residue lysine 337 participates in ATP binding.

This sequence belongs to the class-I aminoacyl-tRNA synthetase family. MetG type 1 subfamily. Requires Zn(2+) as cofactor.

Its subcellular location is the cytoplasm. It catalyses the reaction tRNA(Met) + L-methionine + ATP = L-methionyl-tRNA(Met) + AMP + diphosphate. In terms of biological role, is required not only for elongation of protein synthesis but also for the initiation of all mRNA translation through initiator tRNA(fMet) aminoacylation. This chain is Methionine--tRNA ligase, found in Thermoplasma acidophilum (strain ATCC 25905 / DSM 1728 / JCM 9062 / NBRC 15155 / AMRC-C165).